We begin with the raw amino-acid sequence, 354 residues long: Biotin synthase (354 aa).

The region spanning 40 to 258 is the Radical SAM core domain; it reads NEVQVSTLLS…IAVARILMPR (219 aa). Cys-55, Cys-59, and Cys-62 together coordinate [4Fe-4S] cluster. Residues Cys-99, Cys-130, Cys-190, and Arg-262 each coordinate [2Fe-2S] cluster.

The protein belongs to the radical SAM superfamily. Biotin synthase family. In terms of assembly, homodimer. Requires [4Fe-4S] cluster as cofactor. The cofactor is [2Fe-2S] cluster.

The catalysed reaction is (4R,5S)-dethiobiotin + (sulfur carrier)-SH + 2 reduced [2Fe-2S]-[ferredoxin] + 2 S-adenosyl-L-methionine = (sulfur carrier)-H + biotin + 2 5'-deoxyadenosine + 2 L-methionine + 2 oxidized [2Fe-2S]-[ferredoxin]. It participates in cofactor biosynthesis; biotin biosynthesis; biotin from 7,8-diaminononanoate: step 2/2. Its function is as follows. Catalyzes the conversion of dethiobiotin (DTB) to biotin by the insertion of a sulfur atom into dethiobiotin via a radical-based mechanism. The sequence is that of Biotin synthase from Hahella chejuensis (strain KCTC 2396).